We begin with the raw amino-acid sequence, 1182 residues long: Rho guanine nucleotide exchange factor osg-1 (1182 aa).

The segment covering 1–12 (MLNPNDADDSDS) has biased composition (acidic residues). Residues 1 to 96 (MLNPNDADDS…TNSEPNVDMP (96 aa)) are disordered. The span at 29–41 (ATVSPSTRNSFYN) shows a compositional bias: polar residues. The segment covering 69 to 78 (ASRERSESRR) has biased composition (basic and acidic residues). Residues 357 to 544 (VRHLAARELL…HCLAVAINQH (188 aa)) enclose the DH domain. Residues 637–669 (EDVQISKDTLSQLEEVERKLESSREDDRVLKKM) adopt a coiled-coil conformation. Residues 863–884 (INSSGSDTESSSDEGTSTAGQT) are disordered. Residues 865-879 (SSGSDTESSSDEGTS) show a composition bias toward low complexity. Residues 897–922 (VVNSTERVRSRARDRLARLRNSITSI) are a coiled coil.

In terms of tissue distribution, expressed in muscles in the body wall and head, and in the nervous system in neurons including FLP and ASE neurons in the head.

Its function is as follows. Probable guanine nucleotide exchange factor which regulates the Rho GTPase rho-1. Functions in ASE sensory neurons where it promotes neuronal degeneration under conditions of oxidative stress. The protein is Rho guanine nucleotide exchange factor osg-1 of Caenorhabditis elegans.